The following is a 140-amino-acid chain: 6,7-dimethyl-8-ribityllumazine synthase (140 aa).

5-amino-6-(D-ribitylamino)uracil is bound by residues Phe-11, 43–45 (SFD), and 67–69 (CVI). 72–73 (DT) contributes to the (2S)-2-hydroxy-3-oxobutyl phosphate binding site. Residue His-75 is the Proton donor of the active site. Residue Leu-100 coordinates 5-amino-6-(D-ribitylamino)uracil. Arg-115 contributes to the (2S)-2-hydroxy-3-oxobutyl phosphate binding site.

It belongs to the DMRL synthase family. In terms of assembly, forms an icosahedral capsid composed of 60 subunits, arranged as a dodecamer of pentamers.

It catalyses the reaction (2S)-2-hydroxy-3-oxobutyl phosphate + 5-amino-6-(D-ribitylamino)uracil = 6,7-dimethyl-8-(1-D-ribityl)lumazine + phosphate + 2 H2O + H(+). It participates in cofactor biosynthesis; riboflavin biosynthesis; riboflavin from 2-hydroxy-3-oxobutyl phosphate and 5-amino-6-(D-ribitylamino)uracil: step 1/2. In terms of biological role, catalyzes the formation of 6,7-dimethyl-8-ribityllumazine by condensation of 5-amino-6-(D-ribitylamino)uracil with 3,4-dihydroxy-2-butanone 4-phosphate. This is the penultimate step in the biosynthesis of riboflavin. The sequence is that of 6,7-dimethyl-8-ribityllumazine synthase from Methanococcus vannielii (strain ATCC 35089 / DSM 1224 / JCM 13029 / OCM 148 / SB).